The primary structure comprises 233 residues: MEGGGGIPLETLKEESQSRHVLPASFEVNSLQKSNWGFLLTGLVGGTLVAVYAVATPFVTPALRKVCLPFVPATTKQIENVVKMLRCRRGSLVDIGSGDGRIVIAAAKKGFTAVGYELNPWLVWYSRYRAWREGVHGSAKFYISDLWKVTFSQYSNVVIFGVPQMMLQLEKKLERELEDDARVIACRFPFPHWTPDHVTGEGIDTVWAYDASTFRGREKRPCTSMHFQLPIQA.

Methionine 1 is subject to N-acetylmethionine. The chain crosses the membrane as a helical span at residues 38–58 (FLLTGLVGGTLVAVYAVATPF). The segment at 56–90 (TPFVTPALRKVCLPFVPATTKQIENVVKMLRCRRG) is required for mitochondrial location.

This sequence belongs to the ANT/ATPSC lysine N-methyltransferase family. As to expression, ubiquitously expressed.

It is found in the mitochondrion membrane. It catalyses the reaction L-lysyl-[protein] + 3 S-adenosyl-L-methionine = N(6),N(6),N(6)-trimethyl-L-lysyl-[protein] + 3 S-adenosyl-L-homocysteine + 3 H(+). Its function is as follows. Mitochondrial protein-lysine N-methyltransferase that trimethylates ATP synthase subunit C, ATP5MC1 and ATP5MC2. Trimethylation is required for proper incorporation of the C subunit into the ATP synthase complex and mitochondrial respiration. Promotes chronic pain. Involved in persistent inflammatory and neuropathic pain: methyltransferase activity in the mitochondria of sensory neurons promotes chronic pain via a pathway that depends on the production of reactive oxygen species (ROS) and on the engagement of spinal cord microglia. The protein is ATP synthase subunit C lysine N-methyltransferase of Homo sapiens (Human).